A 263-amino-acid polypeptide reads, in one-letter code: Cobalt-precorrin-6A reductase (263 aa).

Belongs to the precorrin-6x reductase family.

It catalyses the reaction Co-precorrin-6B + NAD(+) = Co-precorrin-6A + NADH + H(+). It functions in the pathway cofactor biosynthesis; adenosylcobalamin biosynthesis; cob(II)yrinate a,c-diamide from sirohydrochlorin (anaerobic route): step 7/10. Its function is as follows. Catalyzes the reduction of the macrocycle of cobalt-precorrin-6A to cobalt-precorrin-6B. In Salmonella typhimurium (strain LT2 / SGSC1412 / ATCC 700720), this protein is Cobalt-precorrin-6A reductase (cbiJ).